A 177-amino-acid polypeptide reads, in one-letter code: Large ribosomal subunit protein uL6 (177 aa).

As to quaternary structure, part of the 50S ribosomal subunit.

Its function is as follows. This protein binds to the 23S rRNA, and is important in its secondary structure. It is located near the subunit interface in the base of the L7/L12 stalk, and near the tRNA binding site of the peptidyltransferase center. This Rhodopseudomonas palustris (strain ATCC BAA-98 / CGA009) protein is Large ribosomal subunit protein uL6.